The chain runs to 362 residues: Protein mom-2 (362 aa).

The first 24 residues, 1–24 (MHINTPVLLAIIYFLVFAPKSADA), serve as a signal peptide directing secretion. 5 disulfide bridges follow: Cys-80-Cys-91, Cys-129-Cys-137, Cys-139-Cys-167, Cys-217-Cys-231, and Cys-219-Cys-226. Asn-90 is a glycosylation site (N-linked (GlcNAc...) asparagine). Ser-223 carries the O-palmitoleoyl serine; by mom-1 lipid modification. A disordered region spans residues 263 to 282 (TVRSSPSAGSSGRSERFARN). Residues 265–274 (RSSPSAGSSG) are compositionally biased toward low complexity. Intrachain disulfides connect Cys-304/Cys-322, Cys-313/Cys-317, Cys-321/Cys-361, Cys-337/Cys-352, Cys-339/Cys-349, and Cys-344/Cys-345.

This sequence belongs to the Wnt family. Post-translationally, palmitoleoylation is required for efficient binding to frizzled receptors. Depalmitoleoylation leads to Wnt signaling pathway inhibition. Expressed by anchor cell and vulva precursor cell descendants P5.ppa, P5.ppp, P7.paa and P7.pap. Expressed in the tail and weakly expressed in the vulva and body wall muscles.

It is found in the secreted. It localises to the extracellular space. The protein localises to the extracellular matrix. Functionally, ligand for members of the frizzled family of seven transmembrane receptors. Required in embryonic development for endoderm specification and the correct positioning and orientation of the mitotic spindles and division planes in blastomere cells. Involved in cleavage axis determination. Binds to receptor tyrosine kinase cam-1. Together with wnt ligand lin-44, plays a role in controlling vulva precursor cell P7.p lineage orientation during vulva development, probably by acting as a ligand for tyrosine kinase receptor lin-18. May act redundantly with other Wnt ligands such as cwn-1 and cwn-2 to control seam cell polarity. In Caenorhabditis elegans, this protein is Protein mom-2 (mom-2).